A 42-amino-acid chain; its full sequence is Lanthionine-containing peptide SapB precursor RamS (42 aa).

The propeptide occupies Met1–Glu21. A disordered region spans residues Met1–Glu21. 2 consecutive cross-links (lanthionine (Ser-Cys)) follow at residues Ser24–Cys31 and Ser34–Cys41. A 2,3-didehydroalanine (Ser) mark is found at Ser27 and Ser37.

It belongs to the lanthionine-containing morphogen family. In terms of processing, maturation involves the enzymatic conversion of Ser into dehydrated AA and the formation of thioether bonds with cysteine, probably by RamC. This is followed by membrane translocation and cleavage of the modified precursor. The RamS precursor protein (detected by an anti-propeptide antibody and by a C-terminal His-tag) is detected from at least 16 hours post-germination; its apparent molecular weight decreases starting from about 34 hours, when its probable modifying enzyme ramC is transcribed. Surfactin, a B.subtilis cyclic lipopeptide antibiotic which prevents aerial hyphae formation in S.coelicolor, decreases localization of RamS precursor protein to the cell membrane, suggesting that processing only occurs at the cell membrane.

It is found in the cell membrane. Its subcellular location is the secreted. It localises to the spore wall. Its function is as follows. Stably accumulated precursor of SapB. Lanthionine-containing peptide devoid of antibiotic properties. A surface active peptide involved in the efficient formation of aerial mycelium when cells are grown in rich media. Has an overlapping function with the surface-active chaplin proteins; chaplins are essential on minimal medium while on rich medium both chaplins and SapB are required for efficient aerial hyphae formation. Required under conditions of high osmolarity where it may change the physical properties of the chaplin layer to allow hyphae to grow into air. Suggested to self-assemble at air-water interfaces, thus providing a film of surfactant through which nascent aerial hyphae can emerge; the aerial hyphae differentiate further into spores. Application to bald mutants (bld, unable to make aerial hyphae) restores hyphae growth. Application to chaplin negative mutants as well as ramC-ramS-ramA-ramB and ramR deletions also restores aerial hyphae growth and sporulation. Reduces surface tension of water from 72 to 30 mJ/m(2). The protein is Lanthionine-containing peptide SapB precursor RamS (ramS) of Streptomyces coelicolor (strain ATCC BAA-471 / A3(2) / M145).